The sequence spans 894 residues: Nitrate reductase [NADPH] (894 aa).

The interval 1 to 79 is disordered; that stretch reads MAVKSQLGVT…PEDLKTPDHR (79 aa). Residues 7–16 are compositionally biased toward polar residues; sequence LGVTYTTKTF. Residues 69–79 are compositionally biased toward basic and acidic residues; it reads LPEDLKTPDHR. Position 169 (Cys169) interacts with Mo-molybdopterin. The Cytochrome b5 heme-binding domain occupies 535–610; the sequence is VRIISLEELK…MPQYHIGTLN (76 aa). Heme is bound by residues His570 and His593. The region spanning 638-749 is the FAD-binding FR-type domain; sequence KYWSKAILET…KGPVGKFEYL (112 aa). FAD contacts are provided by residues 692–695, 709–713, 723–725, Ser773, and Thr776; these read RAYT, LIKIY, and KMT.

This sequence belongs to the nitrate reductase family. As to quaternary structure, homodimer. It depends on FAD as a cofactor. Heme serves as cofactor. The cofactor is Mo-molybdopterin.

It carries out the reaction nitrite + NADP(+) + H2O = nitrate + NADPH + H(+). Nitrate reductase is a key enzyme involved in the first step of nitrate assimilation in plants, fungi and bacteria. This is Nitrate reductase [NADPH] (NIA) from Beauveria bassiana (White muscardine disease fungus).